The following is a 241-amino-acid chain: ATP-dependent Clp protease ATP-binding subunit CLPT2, chloroplastic (241 aa).

A chloroplast-targeting transit peptide spans 1–75 (MAAHSSCNFA…PRRIHKSAIS (75 aa)). One can recognise a Clp R domain in the interval 91–237 (KPKWSWRAIK…ELESFASESG (147 aa)). Repeat stretches follow at residues 94-159 (WSWR…LGKA) and 171-237 (LTED…SESG).

The protein belongs to the ClpA/ClpB family. In terms of assembly, monomer and homodimer. The dimers monomerize before association to the P-ring. Component of the chloroplastic Clp protease core complex which consist of at least 16 proteins: CLPP4 (3 copies), CLPP5 (3 copies), CLPR4 (2 copies), ClpP1 (1 copy), CLPP6 (1 copy), CLPR2 (1 copy), CLPT1 (1 copy), CLPT2 (1 copy) and 3 copies of CLPP3 and/or CLPR1 and/or CLPR3. Interacts with AHK2. Interacts with CPN21. No interactions with CLPS1.

It is found in the plastid. The protein localises to the chloroplast. Its function is as follows. Accessory protein regulating the assembly of the plastidial Clp protease system. CLPT1 first binds to the heptameric P-ring containing the CLP3-6 subunits followed by CLPT2, and only then does the P-ring combine with the R-ring composed of the clpP1 and CLPR1-4 subunits. Once the core complex is fully assembled, it then associates to the CLPC chaperone partner to form the functional protease. CLPT2 and CLPT1 are partially redundant. The sequence is that of ATP-dependent Clp protease ATP-binding subunit CLPT2, chloroplastic from Arabidopsis thaliana (Mouse-ear cress).